Reading from the N-terminus, the 261-residue chain is Kallikrein-2 (261 aa).

The first 18 residues, 1–18 (MWDLVLSIALSVGCTGAV), serve as a signal peptide directing secretion. Positions 19–24 (PLIQSR) are cleaved as a propeptide — activation peptide. The Peptidase S1 domain maps to 25-258 (IVGGWECEKH…YRKWIKDTIA (234 aa)). 5 cysteine pairs are disulfide-bonded: Cys-31/Cys-173, Cys-50/Cys-66, Cys-152/Cys-219, Cys-184/Cys-198, and Cys-209/Cys-234. His-65 functions as the Charge relay system in the catalytic mechanism. Asn-102 carries an N-linked (GlcNAc...) asparagine glycan. Asp-120 functions as the Charge relay system in the catalytic mechanism. Ser-213 serves as the catalytic Charge relay system.

It belongs to the peptidase S1 family. Kallikrein subfamily.

The catalysed reaction is Preferential cleavage of Arg-|-Xaa bonds in small molecule substrates. Highly selective action to release kallidin (lysyl-bradykinin) from kininogen involves hydrolysis of Met-|-Xaa or Leu-|-Xaa.. Functionally, glandular kallikreins cleave Met-Lys and Arg-Ser bonds in kininogen to release Lys-bradykinin. The chain is Kallikrein-2 (KLK2) from Homo sapiens (Human).